The following is a 320-amino-acid chain: Methionyl-tRNA formyltransferase (320 aa).

117-120 (SLLP) provides a ligand contact to (6S)-5,6,7,8-tetrahydrofolate.

This sequence belongs to the Fmt family.

The catalysed reaction is L-methionyl-tRNA(fMet) + (6R)-10-formyltetrahydrofolate = N-formyl-L-methionyl-tRNA(fMet) + (6S)-5,6,7,8-tetrahydrofolate + H(+). In terms of biological role, attaches a formyl group to the free amino group of methionyl-tRNA(fMet). The formyl group appears to play a dual role in the initiator identity of N-formylmethionyl-tRNA by promoting its recognition by IF2 and preventing the misappropriation of this tRNA by the elongation apparatus. The polypeptide is Methionyl-tRNA formyltransferase (Bordetella petrii (strain ATCC BAA-461 / DSM 12804 / CCUG 43448)).